The primary structure comprises 391 residues: MSRSAEEVEATLQIAKVDLEDLRNTVHCLTFSSDFTSGDYSLMELDDTLCKQIEAGDSLVIRGDKSDHAVLCSQDKTYDLKIADTSNLLLFIPGCKTPDQLPADQQPLTIINCEIAGFSNHYWELRRCRPKLKKLKKLLMENTYNGPENERESQDNSLHTTEDLLNMIQASNEELVDHLKAIHACSINGFWRLLDFDYEMKLLNHITQLIDSESWSFSKVPLPVCLQELRSLEPEEMIEHCLTCYGKRLIDEGTGGDFFALDEDKICRATALMLLQNAVKFNLAEFQEVWQQSVPEGMNTRLDQLKGLALVDRTSRPETIFLLKTEDLPEDTQERFNTLFGMREKWAEADIAPYIKDLCGEKQTIGALLTKYARSSMQNGIKLYNSRRPLS.

Belongs to the DCC1 family. Component of the ctf18-RFC complex which consists of ctf18, ctf8, dscc1 and the RFC complex.

It is found in the nucleus. Loads pcna onto primed templates regulating velocity, spacing and restart activity of replication forks. May couple DNA replication to sister chromatid cohesion. The polypeptide is Sister chromatid cohesion protein DCC1 (dscc1) (Xenopus tropicalis (Western clawed frog)).